The chain runs to 665 residues: Cysteine-rich receptor-like protein kinase 41 (665 aa).

The N-terminal stretch at 1-27 (MTSSCSLSRPQHLFFFFFLFVPFLSLG) is a signal peptide. The Extracellular segment spans residues 28 to 280 (QQISVDINSA…DPKPGNDKVK (253 aa)). 2 consecutive Gnk2-homologous domains span residues 42–148 (PSNP…DKPI) and 154–260 (TSPV…SDLR). N-linked (GlcNAc...) asparagine glycosylation is found at Asn120, Asn165, and Asn236. Residues 281–301 (IIIATVCSVIGFAIIAVFLYF) traverse the membrane as a helical segment. The Cytoplasmic portion of the chain corresponds to 302 to 665 (FMTRNRRTAK…DVTITEFDAR (364 aa)). Residues 344–624 (FSRDNQLGEG…VVMLNANSFT (281 aa)) form the Protein kinase domain. ATP-binding positions include 350 to 358 (LGEGGFGAV) and Lys372. A Phosphotyrosine modification is found at Tyr417. The active-site Proton acceptor is Asp469. Phosphoserine is present on Ser473. Residue Thr511 is modified to Phosphothreonine. Residue Tyr519 is modified to Phosphotyrosine.

The protein belongs to the protein kinase superfamily. Ser/Thr protein kinase family. CRK subfamily.

The protein localises to the membrane. The catalysed reaction is L-seryl-[protein] + ATP = O-phospho-L-seryl-[protein] + ADP + H(+). It carries out the reaction L-threonyl-[protein] + ATP = O-phospho-L-threonyl-[protein] + ADP + H(+). This is Cysteine-rich receptor-like protein kinase 41 (CRK41) from Arabidopsis thaliana (Mouse-ear cress).